A 267-amino-acid chain; its full sequence is 2-keto-3-deoxy-L-rhamnonate aldolase (267 aa).

Catalysis depends on H49, which acts as the Proton acceptor. Q151 is a substrate binding site. E153 is a binding site for Mg(2+). Residues A178 and D179 each contribute to the substrate site. Residue D179 participates in Mg(2+) binding.

This sequence belongs to the HpcH/HpaI aldolase family. KDR aldolase subfamily. In terms of assembly, homohexamer. It depends on Mg(2+) as a cofactor.

It catalyses the reaction 2-dehydro-3-deoxy-L-rhamnonate = (S)-lactaldehyde + pyruvate. In terms of biological role, catalyzes the reversible retro-aldol cleavage of 2-keto-3-deoxy-L-rhamnonate (KDR) to pyruvate and lactaldehyde. This is 2-keto-3-deoxy-L-rhamnonate aldolase from Shigella boydii serotype 4 (strain Sb227).